The primary structure comprises 404 residues: Homocysteine-responsive endoplasmic reticulum-resident ubiquitin-like domain member 2 protein (404 aa).

The Ubiquitin-like domain occupies valine 10–arginine 89. The interval cysteine 86 to alanine 153 is disordered. 2 stretches are compositionally biased toward low complexity: residues serine 88–serine 97 and serine 109–serine 126. Polar residues predominate over residues glutamine 127–alanine 153. A helical membrane pass occupies residues phenylalanine 301–phenylalanine 321.

The protein resides in the membrane. Its function is as follows. Could be involved in the unfolded protein response (UPR) pathway. This is Homocysteine-responsive endoplasmic reticulum-resident ubiquitin-like domain member 2 protein (Herpud2) from Mus musculus (Mouse).